Consider the following 163-residue polypeptide: Endoribonuclease YbeY (163 aa).

Residues His-126, His-130, and His-136 each coordinate Zn(2+).

The protein belongs to the endoribonuclease YbeY family. Zn(2+) is required as a cofactor.

The protein localises to the cytoplasm. In terms of biological role, single strand-specific metallo-endoribonuclease involved in late-stage 70S ribosome quality control and in maturation of the 3' terminus of the 16S rRNA. The polypeptide is Endoribonuclease YbeY (Chelativorans sp. (strain BNC1)).